The chain runs to 349 residues: Fe(3+) ions import ATP-binding protein FbpC (349 aa).

Residues 4–236 enclose the ABC transporter domain; sequence LELHHIGKSY…PVDEPTATFL (233 aa). 36–43 serves as a coordination point for ATP; that stretch reads GPSGSGKT.

The protein belongs to the ABC transporter superfamily. Fe(3+) ion importer (TC 3.A.1.10) family. In terms of assembly, the complex is composed of two ATP-binding proteins (FbpC), two transmembrane proteins (FbpB) and a solute-binding protein (FbpA).

It localises to the cell inner membrane. The enzyme catalyses Fe(3+)(out) + ATP + H2O = Fe(3+)(in) + ADP + phosphate + H(+). Its function is as follows. Part of the ABC transporter complex FbpABC involved in Fe(3+) ions import. Responsible for energy coupling to the transport system. This is Fe(3+) ions import ATP-binding protein FbpC from Yersinia pestis bv. Antiqua (strain Antiqua).